We begin with the raw amino-acid sequence, 686 residues long: Glycogenin (686 aa).

Residues Leu13, Asn16, Tyr19, and Arg82 each coordinate UDP. UDP-alpha-D-glucose is bound by residues Leu13, Asn16, Tyr19, Arg82, Lys91, Asp107, Ala108, Asp109, Asn139, Thr140, Asp166, Asp169, and Gln170. Positions 107, 108, and 109 each coordinate UDP. Asp107 serves as a coordination point for Mn(2+). Asp109 contributes to the Mn(2+) binding site. Residues Tyr196 and Tyr198 are each glycosylated (O-linked (Glc...) tyrosine). UDP contacts are provided by His213, Gly216, and Lys219. Mn(2+) is bound at residue His213. Positions 216 and 219 each coordinate UDP-alpha-D-glucose. 4 disordered regions span residues 264-331, 381-444, 460-533, and 603-686; these read VKGE…ANFP, PEPT…RGNA, KHRR…GVPA, and KPLR…VLET. 2 stretches are compositionally biased toward low complexity: residues 285–308 and 398–416; these read SSQSHKTQSHQTQSQNTHSTYTSH and SAASTATPSAVASATASPT. The tract at residues 307-686 is not required for catalytic activity; the sequence is SHGASWDASR…TEEERDVLET (380 aa). Polar residues-rich tracts occupy residues 424–442 and 471–483; these read VTPTTPASANPWTSFTTRG and AATSRPTSPGRAQ. Residues 677–686 show a composition bias toward acidic residues; sequence TEEERDVLET.

This sequence belongs to the glycosyltransferase 8 family. Glycogenin subfamily. Interacts with glycogen synthase gsy-1; the interaction is direct. Mn(2+) serves as cofactor.

The protein resides in the cytoplasm. Its subcellular location is the vacuole. The catalysed reaction is L-tyrosyl-[glycogenin] + UDP-alpha-D-glucose = alpha-D-glucosyl-L-tyrosyl-[glycogenin] + UDP + H(+). It catalyses the reaction [1,4-alpha-D-glucosyl](n)-L-tyrosyl-[glycogenin] + UDP-alpha-D-glucose = [1,4-alpha-D-glucosyl](n+1)-L-tyrosyl-[glycogenin] + UDP + H(+). In terms of biological role, self-glucosylating initiator of glycogen synthesis. It catalyzes the formation of a short alpha (1,4)-glucosyl chain covalently attached via a glucose 1-O-tyrosyl linkage to internal tyrosine residues and these chains act as primers for the elongation reaction catalyzed by glycogen synthase. This Neurospora crassa (strain ATCC 24698 / 74-OR23-1A / CBS 708.71 / DSM 1257 / FGSC 987) protein is Glycogenin.